The chain runs to 185 residues: Large ribosomal subunit protein uL22 (185 aa).

The disordered stretch occupies residues 157-185; it reads VAAPSPEEDAPKKKQSKKKMARQKLMQRD. The span at 169–178 shows a compositional bias: basic residues; it reads KKQSKKKMAR.

The protein belongs to the universal ribosomal protein uL22 family.

This chain is Large ribosomal subunit protein uL22 (RpL17), found in Ixodes scapularis (Black-legged tick).